We begin with the raw amino-acid sequence, 510 residues long: ATP synthase subunit alpha, mitochondrial (510 aa).

Residue 171-178 (GDRQTGKT) participates in ATP binding.

As to quaternary structure, F-type ATP synthases have 2 components, the catalytic core F(1) and the membrane-embedded component F(0), linked together by a central stalk and a peripheral stalk. The central stalk, also called rotor shaft, is often seen as part of F(1). The peripheral stalk is seen as part of F(0). F(0) contains the membrane channel next to the rotor. F-type ATP synthases form dimers but each monomer functions independently in ATP generation. The dimer consists of 18 different polypeptides: ATP1 (subunit alpha, part of F(1), 3 molecules per monomer), ATP2 (subunit beta, part of F(1), 3 molecules per monomer), ATP3 (subunit gamma, part of the central stalk), ATP4 (subunit b, part of the peripheral stalk), ATP5/OSCP (subunit 5/OSCP, part of the peripheral stalk), ATP6 (subunit a, part of the peripheral stalk), ATP7 (subunit d, part of the peripheral stalk), ATP8 (subunit 8, part of the peripheral stalk), OLI1 (subunit c, part of the rotor, 10 molecules per monomer), ATP14 (subunit h, part of the peripheral stalk), ATP15 (subunit epsilon, part of the central stalk), ATP16 (subunit delta, part of the central stalk), ATP17 (subunit f, part of the peripheral stalk), ATP18 (subunit i/j, part of the peripheral stalk). Dimer-specific subunits are ATP19 (subunit k, at interface between monomers), ATP20 (subunit g, at interface between monomers), TIM11 (subunit e, at interface between monomers). Also contains subunit L.

The protein localises to the mitochondrion inner membrane. Functionally, mitochondrial membrane ATP synthase (F(1)F(0) ATP synthase or Complex V) produces ATP from ADP in the presence of a proton gradient across the membrane which is generated by electron transport complexes of the respiratory chain. F-type ATP synthases consist of two structural domains, F(1) - containing the extramembraneous catalytic core, and F(0) - containing the membrane proton channel, linked together by a central stalk and a peripheral stalk. During catalysis, ATP synthesis in the catalytic domain of F(1) is coupled via a rotary mechanism of the central stalk subunits to proton translocation. Subunits alpha/ATP1 and beta/ATP2 form the catalytic core in F(1). Rotation of the central stalk against the surrounding alpha/ATP1(3)beta/ATP2(3) subunits leads to hydrolysis of ATP in three separate catalytic sites on the beta/ATP2 subunits. Subunit alpha/ATP1 does not bear the catalytic high-affinity ATP-binding sites. The sequence is that of ATP synthase subunit alpha, mitochondrial from Pichia angusta (Yeast).